Reading from the N-terminus, the 166-residue chain is MVLNQEKLAKLQAASRTGGKGTPRRKMAPKPKGPGGEDPKLQAALKKLQVEPVSGVEEVNMFKEDGNVLHFAAPKVHGLPTSNTFAVYGNGVDKELTELVPGILNQLGPDSLASLRKLAESYQAMNAQHAASQAAAAGTKDDDDVPDVVENFDEADKKETEVDKLD.

2 disordered regions span residues M1–K40 and H129–D166. An NAC-A/B domain is found at G35–V100. Residues D141–D153 are compositionally biased toward acidic residues. The span at E154–D166 shows a compositional bias: basic and acidic residues.

Belongs to the NAC-beta family. Part of the nascent polypeptide-associated complex (NAC), consisting of EGD2 and EGD1. NAC associates with ribosomes via EGD1.

The protein resides in the cytoplasm. It localises to the nucleus. Functionally, component of the nascent polypeptide-associated complex (NAC), a dynamic component of the ribosomal exit tunnel, protecting the emerging polypeptides from interaction with other cytoplasmic proteins to ensure appropriate nascent protein targeting. The NAC complex also promotes mitochondrial protein import by enhancing productive ribosome interactions with the outer mitochondrial membrane and blocks the inappropriate interaction of ribosomes translating non-secretory nascent polypeptides with translocation sites in the membrane of the endoplasmic reticulum. EGD1 may act as a transcription factor that exert a negative effect on the expression of several genes that are transcribed by RNA polymerase II. The chain is Nascent polypeptide-associated complex subunit beta (EGD1) from Mycosarcoma maydis (Corn smut fungus).